The chain runs to 581 residues: Meiotic PUF family protein 1 (581 aa).

A PUM-HD domain is found at 225-580; sequence FPNGTTEPFE…RIAALVEKSK (356 aa). Pumilio repeat units lie at residues 291–326, 327–362, 363–398, 403–438, 439–474, 475–510, 518–554, and 555–581; these read TILPFSVTLMKNKFGNFLIQKCFEYSTEAQLQSFSY, FLKKHVKELSIDAFGSHVLQKSLEIYPERFTNNLIE, ELIECLPATLMQRHSCHVWQKFFETRRKSLVDGIFD, KMQGKWLQVSVSEMGSLVVQTIFENCKEKDKRTCLD, EIINNMDQIICGQWGNWVIQHIIEHGSEPDKQRILN, SLLKEVESYSTNRYASKVVERALRVCHVTFFDRYVK, ELPTIFLQEIASNQYGNYIVQYLLQVATPSQINLMAE, and HLKKHMVSLRGHKYGQRIAALVEKSKS.

Functionally, RNA-binding protein essential for meiotic progression. The chain is Meiotic PUF family protein 1 (mpf1) from Schizosaccharomyces pombe (strain 972 / ATCC 24843) (Fission yeast).